Consider the following 392-residue polypeptide: Formate-dependent phosphoribosylglycinamide formyltransferase (392 aa).

Residues E20–L21 and E80 contribute to the N(1)-(5-phospho-beta-D-ribosyl)glycinamide site. ATP contacts are provided by residues R112, K153, S158–Q163, E193–I196, and E201. The ATP-grasp domain maps to R117–L306. Mg(2+)-binding residues include E265 and E277. Residues D284, K354, and R361–R362 each bind N(1)-(5-phospho-beta-D-ribosyl)glycinamide.

This sequence belongs to the PurK/PurT family. Homodimer.

The enzyme catalyses N(1)-(5-phospho-beta-D-ribosyl)glycinamide + formate + ATP = N(2)-formyl-N(1)-(5-phospho-beta-D-ribosyl)glycinamide + ADP + phosphate + H(+). Its pathway is purine metabolism; IMP biosynthesis via de novo pathway; N(2)-formyl-N(1)-(5-phospho-D-ribosyl)glycinamide from N(1)-(5-phospho-D-ribosyl)glycinamide (formate route): step 1/1. In terms of biological role, involved in the de novo purine biosynthesis. Catalyzes the transfer of formate to 5-phospho-ribosyl-glycinamide (GAR), producing 5-phospho-ribosyl-N-formylglycinamide (FGAR). Formate is provided by PurU via hydrolysis of 10-formyl-tetrahydrofolate. The chain is Formate-dependent phosphoribosylglycinamide formyltransferase from Geobacter metallireducens (strain ATCC 53774 / DSM 7210 / GS-15).